The sequence spans 315 residues: Methionyl-tRNA formyltransferase (315 aa).

113-116 lines the (6S)-5,6,7,8-tetrahydrofolate pocket; sequence SLLP.

Belongs to the Fmt family.

The catalysed reaction is L-methionyl-tRNA(fMet) + (6R)-10-formyltetrahydrofolate = N-formyl-L-methionyl-tRNA(fMet) + (6S)-5,6,7,8-tetrahydrofolate + H(+). Its function is as follows. Attaches a formyl group to the free amino group of methionyl-tRNA(fMet). The formyl group appears to play a dual role in the initiator identity of N-formylmethionyl-tRNA by promoting its recognition by IF2 and preventing the misappropriation of this tRNA by the elongation apparatus. In Pectobacterium atrosepticum (strain SCRI 1043 / ATCC BAA-672) (Erwinia carotovora subsp. atroseptica), this protein is Methionyl-tRNA formyltransferase.